Consider the following 638-residue polypeptide: MKKSIYRSLKTQQHPLLLRRPLPPKLPKVPLLKKKVRIVHTVKAREPKEETYGKFDPDESAFVKMDQNVSQSQRPTSTQTICLDYDHKALERVVNIFPHQHRVRRFHWKVPKSTAGSMFIPRCLSASSRIFKNTLSQMKKRAKKSSKKEVKEDGYLTKKTFNTLVLSKEFSKPSPTSYSRFIASKFKPLGTQFHPAPKISGYSQELPLLRDVKRAALSPVPSTSSVIPEPQWSERTHPSAAPSKVVLNTGSLPPARSLPTPVLPRKPLRQAMIENAAAAAAAAAAAAAATTTTTTTTTTTTTAVTTTAAVSGKTEAHKPPETVQRTTRTIGPDAHVLRGEGFKAVAATRSETVLALTTLAIINCQIYGRNALNLKGFFLANCPDLTPVAFQLVYLNLSFNDLNQFPIEILYLQNLQVLKLRNNPIKEIPSEIHLLTYLRIFSIAFNYITKLPDGLFCLNYLEELDVSYNEIENISNEIQKLRSLEKLIVDGNPITSFPPGILKLNLIKLQIENTFTCSQFWLESSWNDPQQLTQICSLFLVKNKLLDYIPDAVRKSLKSTSECDWCHGPKFGEGFRIIRSCDIFGVSHVPIMFHVCSSTCYRDIRETSFVLEGFPSRRIALHMDWVKESKVSNVSFYL.

Disordered regions lie at residues 220 to 241 and 306 to 325; these read VPST…PSAA and TTAA…TVQR. 6 LRR repeats span residues 389 to 412, 413 to 435, 437 to 458, 460 to 481, 482 to 504, and 532 to 556; these read AFQL…ILYL, QNLQ…IHLL, YLRI…LFCL, YLEE…IQKL, RSLE…ILKL, and LTQI…VRKS.

The chain is Leucine-rich repeat-containing protein 63 from Mus musculus (Mouse).